A 377-amino-acid chain; its full sequence is Succinyl-diaminopimelate desuccinylase (377 aa).

A Zn(2+)-binding site is contributed by H67. D69 is a catalytic residue. Residue D100 participates in Zn(2+) binding. The active-site Proton acceptor is E134. Residues E135, E163, and H349 each coordinate Zn(2+).

This sequence belongs to the peptidase M20A family. DapE subfamily. In terms of assembly, homodimer. The cofactor is Zn(2+). Co(2+) serves as cofactor.

It carries out the reaction N-succinyl-(2S,6S)-2,6-diaminopimelate + H2O = (2S,6S)-2,6-diaminopimelate + succinate. Its pathway is amino-acid biosynthesis; L-lysine biosynthesis via DAP pathway; LL-2,6-diaminopimelate from (S)-tetrahydrodipicolinate (succinylase route): step 3/3. Its function is as follows. Catalyzes the hydrolysis of N-succinyl-L,L-diaminopimelic acid (SDAP), forming succinate and LL-2,6-diaminopimelate (DAP), an intermediate involved in the bacterial biosynthesis of lysine and meso-diaminopimelic acid, an essential component of bacterial cell walls. The protein is Succinyl-diaminopimelate desuccinylase of Buchnera aphidicola subsp. Baizongia pistaciae (strain Bp).